A 431-amino-acid polypeptide reads, in one-letter code: 3-isopropylmalate dehydratase large subunit (431 aa).

[4Fe-4S] cluster contacts are provided by Cys308, Cys368, and Cys371.

The protein belongs to the aconitase/IPM isomerase family. LeuC type 2 subfamily. As to quaternary structure, heterodimer of LeuC and LeuD. The cofactor is [4Fe-4S] cluster.

The enzyme catalyses (2R,3S)-3-isopropylmalate = (2S)-2-isopropylmalate. It participates in amino-acid biosynthesis; L-leucine biosynthesis; L-leucine from 3-methyl-2-oxobutanoate: step 2/4. In terms of biological role, catalyzes the isomerization between 2-isopropylmalate and 3-isopropylmalate, via the formation of 2-isopropylmaleate. The polypeptide is 3-isopropylmalate dehydratase large subunit (Desulfosudis oleivorans (strain DSM 6200 / JCM 39069 / Hxd3) (Desulfococcus oleovorans)).